The chain runs to 119 residues: C-X-C motif chemokine 17 (119 aa).

An N-terminal signal peptide occupies residues 1 to 21; the sequence is MKVLISSLLLLLPLMLMSMVS. Cystine bridges form between C75-C103 and C77-C110. The interval 81-100 is disordered; it reads KGNVKKTRHQRHHRKPNKHS. Over residues 82–100 the composition is skewed to basic residues; it reads GNVKKTRHQRHHRKPNKHS.

This sequence belongs to the intercrine alpha (chemokine CxC) family. Post-translationally, likely to undergo an endoproteolytic process to form a four-cysteine-containing mature peptide with a canonical CXC chemokine scaffold after secretion. As to expression, detected in trachea, stomach, lung and skeletal muscle. Detected in intestine and in normal and asthmatic lung (at protein level). Breast tumors showed 3- to 24-fold up-regulation.

The protein localises to the secreted. Its function is as follows. Chemokine that acts as a chemoattractant for monocytes, macrophages and dendritic cells. Plays a role in angiogenesis and possibly in the development of tumors. Acts as an anti-inflammatory in the stomach. May play a role in the innate defense against infections. Activates the C-X-C chemokine receptor GPR35 to induce a rapid and transient rise in the level of intracellular calcium ions. In terms of biological role, seems to exhibit much higher chemoattractant potency on monocytes and macrophages than 6-Cys CXCL17. In Homo sapiens (Human), this protein is C-X-C motif chemokine 17 (CXCL17).